The primary structure comprises 355 residues: MKLTVNLPNTPYDILIQRGSLAQTGAWVKELWKPQKIAIITDDHVGSLYRETVQSSLEQAGFETIVFEFPEGEASKNLDTVNQAYEFLVKNGMTRSDGIIALGGGVVGDLAGFVASTYMRGIHFLQIPTSLTAQVDSSIGGKTGVNTPFAKNMVGTFCQPDGVLIDPDTLKTLGKRELIEGMGEVVKYGLIDDVELWETLDQLDGSVESILEHADYIIYHSCEVKRKVVVEDELDNGVRLYLNFGHTIGHAIEATAGYGQVMHGEAVAIGMVQISRAAEKKGLMPAGMTAKIIAMCEKFGLPTTHQPWNVDELYASLTHDKKTRGKTIKLVIVPQLGQAAIHQIPMEEMLEFLQV.

NAD(+) is bound by residues 71 to 76 (EGEASK), 105 to 109 (GVVGD), 129 to 130 (TS), Lys142, Lys151, and 169 to 172 (TLKT). Zn(2+)-binding residues include Glu184, His246, and His263.

It belongs to the sugar phosphate cyclases superfamily. Dehydroquinate synthase family. Co(2+) serves as cofactor. The cofactor is Zn(2+). Requires NAD(+) as cofactor.

The protein resides in the cytoplasm. The catalysed reaction is 7-phospho-2-dehydro-3-deoxy-D-arabino-heptonate = 3-dehydroquinate + phosphate. It functions in the pathway metabolic intermediate biosynthesis; chorismate biosynthesis; chorismate from D-erythrose 4-phosphate and phosphoenolpyruvate: step 2/7. In terms of biological role, catalyzes the conversion of 3-deoxy-D-arabino-heptulosonate 7-phosphate (DAHP) to dehydroquinate (DHQ). The polypeptide is 3-dehydroquinate synthase (Streptococcus suis (strain 98HAH33)).